The primary structure comprises 259 residues: 14-3-3-like protein (259 aa).

Positions 237–259 (DTTDDAEDEIREGSKQESGDGQQ) are disordered. A compositionally biased stretch (basic and acidic residues) spans 247 to 259 (REGSKQESGDGQQ).

This sequence belongs to the 14-3-3 family. In terms of tissue distribution, leaves specific.

The sequence is that of 14-3-3-like protein from Solanum tuberosum (Potato).